Here is a 402-residue protein sequence, read N- to C-terminus: S-adenosylmethionine synthase (402 aa).

Position 137–142 (137–142) interacts with ATP; sequence GQGSAD.

It belongs to the AdoMet synthase 2 family. Requires Mg(2+) as cofactor.

It catalyses the reaction L-methionine + ATP + H2O = S-adenosyl-L-methionine + phosphate + diphosphate. The protein operates within amino-acid biosynthesis; S-adenosyl-L-methionine biosynthesis; S-adenosyl-L-methionine from L-methionine: step 1/1. Functionally, catalyzes the formation of S-adenosylmethionine from methionine and ATP. The sequence is that of S-adenosylmethionine synthase from Pyrobaculum aerophilum (strain ATCC 51768 / DSM 7523 / JCM 9630 / CIP 104966 / NBRC 100827 / IM2).